The following is a 116-amino-acid chain: Protein BIC2 (116 aa).

Disordered regions lie at residues methionine 1–proline 33 and aspartate 95–cysteine 116.

Its subcellular location is the nucleus. Its function is as follows. Regulates the blue-light dependent dimerization of CRY2 and formation of photobodies. Inhibits CRY phosphorylation. The chain is Protein BIC2 from Arabidopsis thaliana (Mouse-ear cress).